The chain runs to 318 residues: Sucrose operon repressor (318 aa).

Positions 1–56 (MIKLEDVANKAGVSVTTVSRVINRKGYLSDATISKVEKAMQDLHYIPNAAARSLQG) constitute an HTH lacI-type domain. Residues 4 to 23 (LEDVANKAGVSVTTVSRVIN) constitute a DNA-binding region (H-T-H motif).

This protein may control the expression of the genes that are involved in the transport and catabolism of sucrose. This Lactococcus lactis subsp. lactis (Streptococcus lactis) protein is Sucrose operon repressor (sacR).